A 460-amino-acid chain; its full sequence is 3'3'-cGAMP-specific phosphodiesterase 3 (460 aa).

The HD domain maps to 28–189; that stretch reads PPEHCIRCCW…IPLFSRIALL (162 aa). One can recognise an HD-GYP domain in the interval 260-455; sequence DDAYLECIVT…LPDEYTQLPH (196 aa). A divalent metal cation-binding residues include His-317 and Asp-318. Catalysis depends on Lys-321, which acts as the Proton donor. A divalent metal cation contacts are provided by His-346, His-370, His-371, and Asp-399.

In terms of assembly, monomer. Mn(2+) serves as cofactor.

It catalyses the reaction 3',3'-cGAMP + H2O = 5'-pApG-3' + H(+). Phosphodiesterase (PDE) that catalyzes the hydrolysis of 3'3'-cyclic GMP-AMP (3'3'-cGAMP), leading to linear 5'-pApG. Counteracts the function of the 3'3'-cGAMP synthase DncV, and is involved in the modulation of intracellular 3'3'-cGAMP levels. Enhances bacterial chemotaxis and inhibits intestinal colonization in vivo. Thus exerts a crucial role in regulating bacterial infectivity through catalyzing 3'3'-cGAMP degradation. Is specific for 3'3'-cGAMP since it cannot degrade other cGAMP linkage isomers (3'2'-, 2'3'-, and 2'2'-cGAMPs); is also able to hydrolyze c-di-GMP but not c-di-AMP. The polypeptide is 3'3'-cGAMP-specific phosphodiesterase 3 (Vibrio cholerae serotype O1 (strain ATCC 39315 / El Tor Inaba N16961)).